The primary structure comprises 1253 residues: Myosin heavy chain 95F (1253 aa).

One can recognise a Myosin N-terminal SH3-like domain in the interval Glu-3–Asp-54. In terms of domain architecture, Myosin motor spans Gln-57–Arg-766. Residue Gly-151–Thr-158 coordinates ATP. The interval Gly-647 to Pro-666 is actin-binding. The 30-residue stretch at Arg-808–Lys-837 folds into the IQ domain. Residues Ala-900–Gln-1022 are a coiled coil. The tract at residues Pro-1187–Gly-1193 is hydrophobic region. The disordered stretch occupies residues Ala-1233–Gln-1253.

Belongs to the TRAFAC class myosin-kinesin ATPase superfamily. Myosin family. In terms of tissue distribution, isoform B is present at a higher level in the head and gonads than in the thoraxes. Isoform 145 kDa is found only in the head. CLIP-190 and jar are coexpressed at several times in development and in a number of tissues, including embryonic axonal neuron processes and posterior pole.

It is found in the cytoplasm. Its subcellular location is the cytoskeleton. Functionally, myosin is a protein that binds to actin and has ATPase activity that is activated by actin. Together CLIP-190 and jar may coordinate the interaction between the actin and microtubule cytoskeleton. May link endocytic vesicles to microtubules and may be involved in transport in the early embryo and in the dynamic process of dorsal closure. It is believed that its function changes during the life cycle. In Drosophila melanogaster (Fruit fly), this protein is Myosin heavy chain 95F (jar).